The primary structure comprises 270 residues: uncharacterized protein (270 aa).

The protein to T.pallidum TP_0127, TP_0315 and TP_0618.

This is an uncharacterized protein from Treponema pallidum (strain Nichols).